The primary structure comprises 195 residues: Peptidyl-tRNA hydrolase (195 aa).

Residue Tyr17 participates in tRNA binding. His22 functions as the Proton acceptor in the catalytic mechanism. Phe68, Asn70, and Asn116 together coordinate tRNA.

It belongs to the PTH family. In terms of assembly, monomer.

It is found in the cytoplasm. It catalyses the reaction an N-acyl-L-alpha-aminoacyl-tRNA + H2O = an N-acyl-L-amino acid + a tRNA + H(+). Its function is as follows. Hydrolyzes ribosome-free peptidyl-tRNAs (with 1 or more amino acids incorporated), which drop off the ribosome during protein synthesis, or as a result of ribosome stalling. Catalyzes the release of premature peptidyl moieties from peptidyl-tRNA molecules trapped in stalled 50S ribosomal subunits, and thus maintains levels of free tRNAs and 50S ribosomes. In Pectobacterium atrosepticum (strain SCRI 1043 / ATCC BAA-672) (Erwinia carotovora subsp. atroseptica), this protein is Peptidyl-tRNA hydrolase.